Here is a 142-residue protein sequence, read N- to C-terminus: MKSKRRKARELAIQVLYSWQISKKIVLFETEKYVIEQNKKYSLDKIYFHKIVTGVIKNIFYIDKIIKKNISKKKNRLDYIEQAILRLASYEIIKRLDIPYKVIINEGIELAKIYGSNKSHKFINSILDKIITNKNNIKIKNF.

This sequence belongs to the NusB family.

Its function is as follows. Involved in transcription antitermination. Required for transcription of ribosomal RNA (rRNA) genes. Binds specifically to the boxA antiterminator sequence of the ribosomal RNA (rrn) operons. In Buchnera aphidicola subsp. Cinara cedri (strain Cc), this protein is Transcription antitermination protein NusB.